Reading from the N-terminus, the 51-residue chain is Cytochrome b559 subunit beta (51 aa).

A helical membrane pass occupies residues 26 to 42 (WLAVHALAVPTVFFIGS). Histidine 30 lines the heme pocket.

It belongs to the PsbE/PsbF family. As to quaternary structure, heterodimer of an alpha subunit and a beta subunit. PSII is composed of 1 copy each of membrane proteins PsbA, PsbB, PsbC, PsbD, PsbE, PsbF, PsbH, PsbI, PsbJ, PsbK, PsbL, PsbM, PsbT, PsbY, PsbZ, Psb30/Ycf12, at least 3 peripheral proteins of the oxygen-evolving complex and a large number of cofactors. It forms dimeric complexes. It depends on heme b as a cofactor.

It is found in the plastid. Its subcellular location is the chloroplast thylakoid membrane. This b-type cytochrome is tightly associated with the reaction center of photosystem II (PSII). PSII is a light-driven water:plastoquinone oxidoreductase that uses light energy to abstract electrons from H(2)O, generating O(2) and a proton gradient subsequently used for ATP formation. It consists of a core antenna complex that captures photons, and an electron transfer chain that converts photonic excitation into a charge separation. This Bigelowiella natans (Pedinomonas minutissima) protein is Cytochrome b559 subunit beta.